The chain runs to 498 residues: ATP synthase subunit beta, chloroplastic (498 aa).

172 to 179 (GGAGVGKT) contributes to the ATP binding site.

This sequence belongs to the ATPase alpha/beta chains family. In terms of assembly, F-type ATPases have 2 components, CF(1) - the catalytic core - and CF(0) - the membrane proton channel. CF(1) has five subunits: alpha(3), beta(3), gamma(1), delta(1), epsilon(1). CF(0) has four main subunits: a(1), b(1), b'(1) and c(9-12).

The protein localises to the plastid. It is found in the chloroplast thylakoid membrane. It carries out the reaction ATP + H2O + 4 H(+)(in) = ADP + phosphate + 5 H(+)(out). In terms of biological role, produces ATP from ADP in the presence of a proton gradient across the membrane. The catalytic sites are hosted primarily by the beta subunits. This Hyophorbe lagenicaulis (Bottle palm) protein is ATP synthase subunit beta, chloroplastic.